Consider the following 158-residue polypeptide: Transcriptional repressor NrdR (158 aa).

A zinc finger lies at 3–34 (CPSCQNTDSRVLESRAADAGRSVRRRRECLHC). The ATP-cone domain maps to 49–139 (ITVLKRNGNR…VYRHFRGIND (91 aa)).

It belongs to the NrdR family. The cofactor is Zn(2+).

Negatively regulates transcription of bacterial ribonucleotide reductase nrd genes and operons by binding to NrdR-boxes. The sequence is that of Transcriptional repressor NrdR from Prochlorococcus marinus (strain MIT 9303).